Consider the following 250-residue polypeptide: Histone H1.3 (250 aa).

Disordered stretches follow at residues 17 to 53 (AASG…QMVD) and 104 to 250 (QTKG…ATKK). The span at 27 to 42 (KKAAATPKSKKSTAAP) shows a compositional bias: low complexity. Residues 44–118 (SHPPTQQMVD…GASGSFKLSR (75 aa)) enclose the H15 domain. Residues 120 to 133 (AKKDAKPKASAVEK) show a composition bias toward basic and acidic residues. The span at 138-161 (VNASAAAATKRSSSTSTTKKAAGA) shows a compositional bias: low complexity. Over residues 174–191 (KNVEKKKADKEKAKDAKK) the composition is skewed to basic and acidic residues. Over residues 192–234 (TGTIKAKLTTAKAKSSATKPKTPKPKTTSAKPKKVVSATTPKK) the composition is skewed to low complexity. Residues 235–250 (TAVKKPKAKTASATKK) are compositionally biased toward basic residues.

Belongs to the histone H1/H5 family.

The protein localises to the nucleus. It is found in the chromosome. In terms of biological role, histones H1 are necessary for the condensation of nucleosome chains into higher-order structures. This chain is Histone H1.3 (His1.3), found in Drosophila virilis (Fruit fly).